Consider the following 269-residue polypeptide: Mediator of RNA polymerase II transcription subunit 8 (269 aa).

The disordered stretch occupies residues 187-217 (RVLEDDDEEDESDSEEGEGEADEMEVVGARR). Residues 190–211 (EDDDEEDESDSEEGEGEADEME) are compositionally biased toward acidic residues.

Belongs to the Mediator complex subunit 8 family. Component of the Mediator complex.

It localises to the nucleus. In terms of biological role, component of the Mediator complex, a coactivator involved in the regulated transcription of nearly all RNA polymerase II-dependent genes. Mediator functions as a bridge to convey information from gene-specific regulatory proteins to the basal RNA polymerase II transcription machinery. Mediator is recruited to promoters by direct interactions with regulatory proteins and serves as a scaffold for the assembly of a functional preinitiation complex with RNA polymerase II and the general transcription factors. The chain is Mediator of RNA polymerase II transcription subunit 8 (med8) from Aspergillus niger (strain ATCC MYA-4892 / CBS 513.88 / FGSC A1513).